A 186-amino-acid chain; its full sequence is MFLMKDIVRDGDPVLRQEAADVTFPLSEEDQQLAKDLMEYLVVSQDPEQCKKYGLRAGVGLAAPQVGVSKKMASVLVPPVEEDGKSPFTDVIINPVIISESVQAGALTEGEGCLSVDKDVPGFVPRHDRITLRYYDVNGEKHQVRLKNYPAIVCQHEIDHLHGTLFYDHINKDQPFSRDDDMIMIE.

Fe cation is bound by residues C113 and H156. The active site involves E157. Residue H160 participates in Fe cation binding.

It belongs to the polypeptide deformylase family. Fe(2+) serves as cofactor.

The catalysed reaction is N-terminal N-formyl-L-methionyl-[peptide] + H2O = N-terminal L-methionyl-[peptide] + formate. Removes the formyl group from the N-terminal Met of newly synthesized proteins. Requires at least a dipeptide for an efficient rate of reaction. N-terminal L-methionine is a prerequisite for activity but the enzyme has broad specificity at other positions. In Levilactobacillus brevis (strain ATCC 367 / BCRC 12310 / CIP 105137 / JCM 1170 / LMG 11437 / NCIMB 947 / NCTC 947) (Lactobacillus brevis), this protein is Peptide deformylase.